Reading from the N-terminus, the 323-residue chain is tRNA(Ile)-lysidine synthase (323 aa).

33–38 (SGGSDS) is a binding site for ATP.

Belongs to the tRNA(Ile)-lysidine synthase family.

The protein resides in the cytoplasm. The enzyme catalyses cytidine(34) in tRNA(Ile2) + L-lysine + ATP = lysidine(34) in tRNA(Ile2) + AMP + diphosphate + H(+). In terms of biological role, ligates lysine onto the cytidine present at position 34 of the AUA codon-specific tRNA(Ile) that contains the anticodon CAU, in an ATP-dependent manner. Cytidine is converted to lysidine, thus changing the amino acid specificity of the tRNA from methionine to isoleucine. The chain is tRNA(Ile)-lysidine synthase from Mycobacterium leprae (strain TN).